Here is a 246-residue protein sequence, read N- to C-terminus: Virulence plasmid protein pGP6-D (246 aa).

Belongs to the UPF0137 (pGP6-D) family.

The protein is Virulence plasmid protein pGP6-D of Chlamydia psittaci (Chlamydophila psittaci).